The primary structure comprises 417 residues: SNF1 protein kinase subunit beta-3 (417 aa).

Residues 1–12 (MAGDNPENKDAS) show a composition bias toward basic and acidic residues. Residues 1 to 37 (MAGDNPENKDASMLDVSDAASNTTINGKHSADSTNEA) are disordered. Phosphoserine is present on residues Ser-12, Ser-21, Ser-44, and Ser-135. The span at 19–37 (AASNTTINGKHSADSTNEA) shows a compositional bias: polar residues. Disordered stretches follow at residues 64-155 (SSLI…VEGK) and 250-269 (GNEP…DDSK). A compositionally biased stretch (polar residues) spans 118–136 (TGNTLQKMDYQPSQQPDSL). Positions 137–149 (QNQGFQQQQEQQQ) are enriched in low complexity. The interval 152–342 (VEGKKGRAMM…DQQQNNHQNM (191 aa)) is kinase-interacting sequence (KIS); required for interaction with SNF1. Over residues 257-269 (LAEKKANHVDDSK) the composition is skewed to basic and acidic residues. Ser-276 and Ser-279 each carry phosphoserine. Residues 343 to 417 (AWLTPPQLPP…VTQILYTPLQ (75 aa)) are association with SNF1 kinase complex (ASC) domain; required for interaction with SNF4.

This sequence belongs to the 5'-AMP-activated protein kinase beta subunit family. In terms of assembly, component of the SNF1 kinase complex, a heterotrimeric complex composed of the catalytic alpha subunit SNF1, one of the three related beta subunits SIP1, SIP2 or GAL83, and the regulatory gamma subunit SNF4. The beta subunit serves as a bridge between the catalytic and the regulatory subunit. Interacts (via KIS domain) with SNF1. Interacts (via ASC domain) with SNF4. Interacts with REE1. Post-translationally, phosphorylated by SNF1 in vitro.

It localises to the cytoplasm. It is found in the nucleus. Functionally, beta subunit of the SNF1 kinase complex, which is required for transcriptional, metabolic, and developmental adaptations in response to glucose limitation. Has a structural role, mediating heterotrimer formation, and a regulatory role, defining carbon source-regulated subcellular location and substrate specificity of the SNF1 kinase complex. Promotes the relocalization of the SNF1 kinase complex to the nucleus upon shift to nonfermentable carbon sources. The polypeptide is SNF1 protein kinase subunit beta-3 (GAL83) (Saccharomyces cerevisiae (strain ATCC 204508 / S288c) (Baker's yeast)).